We begin with the raw amino-acid sequence, 155 residues long: Histone H2B.5 (155 aa).

2 stretches are compositionally biased toward basic and acidic residues: residues 1 to 28 (MAPK…EKAP) and 36 to 54 (EKRL…GKKD). The interval 1-63 (MAPKAEKKPA…DRAGRKKAKK (63 aa)) is disordered. 2 positions are modified to N6-acetyllysine: lysine 7 and lysine 37. Lysine 151 participates in a covalent cross-link: Glycyl lysine isopeptide (Lys-Gly) (interchain with G-Cter in ubiquitin).

Belongs to the histone H2B family. The nucleosome is a histone octamer containing two molecules each of H2A, H2B, H3 and H4 assembled in one H3-H4 heterotetramer and two H2A-H2B heterodimers. The octamer wraps approximately 147 bp of DNA. Post-translationally, can be acetylated to form H2BK6ac and H2BK33ac. In terms of processing, monoubiquitinated by BRE1 to form H2BK143ub1 and deubiquitinated by UBP26. Required for heterochromatic histone H3 di- and trimethylation at H3K4me. May give a specific tag for epigenetic transcriptional activation.

It is found in the nucleus. The protein localises to the chromosome. Core component of nucleosome. Nucleosomes wrap and compact DNA into chromatin, limiting DNA accessibility to the cellular machineries which require DNA as a template. Histones thereby play a central role in transcription regulation, DNA repair, DNA replication and chromosomal stability. DNA accessibility is regulated via a complex set of post-translational modifications of histones, also called histone code, and nucleosome remodeling. The polypeptide is Histone H2B.5 (H2B.5) (Oryza sativa subsp. japonica (Rice)).